The following is a 258-amino-acid chain: Heat-labile enterotoxin A chain (258 aa).

A signal peptide spans 1 to 18; that stretch reads MKNITFIFFILLASPLYA. NAD(+) is bound at residue 25 to 39; it reads RADSRPPDEIKRSGG. Glu-128 is a catalytic residue. The cysteines at positions 205 and 217 are disulfide-linked.

Belongs to the enterotoxin A family. As to quaternary structure, heterohexamer of one A chain and of five B chains.

Functionally, the biological activity of the toxin is produced by the A chain, which activates intracellular adenyl cyclase. The protein is Heat-labile enterotoxin A chain (eltA) of Escherichia coli O78:H11 (strain H10407 / ETEC).